We begin with the raw amino-acid sequence, 181 residues long: MSADTKTQRLIPMGVLKGAHGVRGEVRVKSFTADPDALFTYGPLMDEAGKVLLTPITARPGKDHFIVRPKENLQKEDWDALRGCLLHASRDQLPEADEDEFYFEDLIGMPVYTVGEEPEARVRAVQNFGSGDLLEIEIPGAPATIYVPLTRADVPVIDMAAHRIVIPELSLWANQDEDDAS.

The region spanning glutamate 98–tryptophan 172 is the PRC barrel domain.

This sequence belongs to the RimM family. In terms of assembly, binds ribosomal protein uS19.

It localises to the cytoplasm. An accessory protein needed during the final step in the assembly of 30S ribosomal subunit, possibly for assembly of the head region. Essential for efficient processing of 16S rRNA. May be needed both before and after RbfA during the maturation of 16S rRNA. It has affinity for free ribosomal 30S subunits but not for 70S ribosomes. The chain is Ribosome maturation factor RimM from Hyphomonas neptunium (strain ATCC 15444).